Reading from the N-terminus, the 330-residue chain is Elongation factor Ts, mitochondrial (330 aa).

The transit peptide at M1–Y16 directs the protein to the mitochondrion.

The protein belongs to the EF-Ts family.

It localises to the mitochondrion. Functionally, associates with the EF-Tu.GDP complex and induces the exchange of GDP to GTP. It remains bound to the aminoacyl-tRNA.EF-Tu.GTP complex up to the GTP hydrolysis stage on the ribosome. The chain is Elongation factor Ts, mitochondrial from Laccaria bicolor (strain S238N-H82 / ATCC MYA-4686) (Bicoloured deceiver).